The chain runs to 425 residues: Serine--tRNA ligase (425 aa).

Thr-230–Glu-232 serves as a coordination point for L-serine. Arg-261–Glu-263 is an ATP binding site. Glu-284 contacts L-serine. Glu-348–Ser-351 provides a ligand contact to ATP. Residue Ser-384 coordinates L-serine.

The protein belongs to the class-II aminoacyl-tRNA synthetase family. Type-1 seryl-tRNA synthetase subfamily. As to quaternary structure, homodimer. The tRNA molecule binds across the dimer.

The protein resides in the cytoplasm. The catalysed reaction is tRNA(Ser) + L-serine + ATP = L-seryl-tRNA(Ser) + AMP + diphosphate + H(+). It catalyses the reaction tRNA(Sec) + L-serine + ATP = L-seryl-tRNA(Sec) + AMP + diphosphate + H(+). The protein operates within aminoacyl-tRNA biosynthesis; selenocysteinyl-tRNA(Sec) biosynthesis; L-seryl-tRNA(Sec) from L-serine and tRNA(Sec): step 1/1. Functionally, catalyzes the attachment of serine to tRNA(Ser). Is also able to aminoacylate tRNA(Sec) with serine, to form the misacylated tRNA L-seryl-tRNA(Sec), which will be further converted into selenocysteinyl-tRNA(Sec). This is Serine--tRNA ligase from Streptococcus thermophilus (strain ATCC BAA-491 / LMD-9).